A 108-amino-acid polypeptide reads, in one-letter code: UPF0145 protein Npun_F4817 (108 aa).

The protein belongs to the UPF0145 family.

This Nostoc punctiforme (strain ATCC 29133 / PCC 73102) protein is UPF0145 protein Npun_F4817.